Reading from the N-terminus, the 398-residue chain is Enoate reductase 1 (398 aa).

Positions 37 and 191 each coordinate FMN. 2 residues coordinate substrate: His-191 and Asn-194. Tyr-196 acts as the Proton donor in catalysis. 2 residues coordinate FMN: Arg-243 and Arg-348. Tyr-375 serves as a coordination point for substrate.

The protein belongs to the NADH:flavin oxidoreductase/NADH oxidase family. As to quaternary structure, homodimer or heterodimer. FMN serves as cofactor.

It carries out the reaction butanoate + NAD(+) = (2E)-2-butenoate + NADH + H(+). Its function is as follows. Enoate reductase with broad substrate specificity for different alpha,beta-unsaturated carbonyl compounds. Prefers NADPH over NADH as cofactor. The polypeptide is Enoate reductase 1 (KYE1) (Kluyveromyces lactis (strain ATCC 8585 / CBS 2359 / DSM 70799 / NBRC 1267 / NRRL Y-1140 / WM37) (Yeast)).